Reading from the N-terminus, the 773-residue chain is 4'-phosphopantetheine phosphatase (773 aa).

Ala-2 carries the post-translational modification N-acetylalanine. The interval 2-402 (AECRASGGGS…APELCPTQRA (401 aa)) is pantothenate kinase. Positions 196 and 199 each coordinate acetyl-CoA. Residue Tyr-320 is modified to 3'-nitrotyrosine. The interval 403-773 (RSGTFDLLEM…VIFKYEVPAE (371 aa)) is 4'-phosphopantetheine phosphatase. Ser-404 is subject to Phosphoserine. Thr-406 carries the phosphothreonine modification. Positions 623, 624, and 659 each coordinate Mn(2+). A Subfamily II EGMGR motif motif is present at residues 724-728 (EGMGR).

This sequence in the N-terminal section; belongs to the type II pantothenate kinase family. It in the C-terminal section; belongs to the damage-control phosphatase family. Phosphopantetheine phosphatase (II) subfamily. Homodimer. Interacts with PKM. Mn(2+) serves as cofactor. Requires Ni(2+) as cofactor.

It is found in the cytoplasm. It carries out the reaction (R)-4'-phosphopantetheine + H2O = (R)-pantetheine + phosphate. It catalyses the reaction (R)-4'-phosphopantetheine sulfonate + H2O = (R)-pantetheine sulfonate + phosphate. The catalysed reaction is (R)-4'-phospho-S-sulfopantetheine + H2O = (R)-S-sulfopantetheine + phosphate. Its activity is regulated as follows. Activity is strongly promoted by Co(2+), Ni(2+), Mg(2+) and Mn(2+). Activity is inhibited by EDTA. In terms of biological role, phosphatase which shows a preference for 4'-phosphopantetheine and its oxidatively damaged forms (sulfonate or S-sulfonate), providing strong indirect evidence that the phosphatase activity pre-empts damage in the coenzyme A (CoA) pathway. Hydrolyzing excess 4'-phosphopantetheine could constitute a directed overflow mechanism to prevent its oxidation to the S-sulfonate, sulfonate, or other forms. Hydrolyzing 4'-phosphopantetheine sulfonate or S-sulfonate would forestall their conversion to inactive forms of CoA and acyl carrier protein. May play a role in the physiological regulation of CoA intracellular levels. This is 4'-phosphopantetheine phosphatase from Rattus norvegicus (Rat).